The sequence spans 622 residues: E3 ubiquitin-protein ligase RNF12-A (622 aa).

Disordered regions lie at residues 1–26 (MESA…MDRL), 67–386 (RLQQ…ESER), and 473–514 (NANA…NSRG). Low complexity predominate over residues 11 to 21 (SIEQSESQRQS). Polar residues-rich tracts occupy residues 110–138 (SVRQ…NPNS) and 147–163 (INVN…SLDQ). The segment covering 216-242 (RSPDQRRTRARTDRSRSPLHHAVDPPI) has biased composition (basic and acidic residues). Positions 247-256 (HSSSQTVDTS) are enriched in polar residues. The segment covering 272 to 289 (SSQVQNSSSSNETEGSSR) has biased composition (low complexity). Polar residues predominate over residues 300 to 317 (VLGTEGQSQSTVHLSNPE). A compositionally biased stretch (low complexity) spans 318 to 331 (TRSSSQTPQTDSST). A compositionally biased stretch (polar residues) spans 332-341 (NAETTGTGQR). Positions 355–365 (RPGDYRQRDSI) are enriched in basic and acidic residues. The segment covering 366-382 (ANRTRSRSQTPNNTVTY) has biased composition (polar residues). The RING-type; atypical zinc finger occupies 568–609 (CSVCITEYTEGNKLRKLPCSHEYHIHCIDRWLSENSTCPICR). Residues 619-622 (ESIV) carry the PDZ-binding motif.

Belongs to the RNF12 family. In terms of assembly, forms homodimers through the C-terminal region. The N-terminus interacts with the homeobox of LIM/homeobox factor lhx1/lim1, with lhx3/lim3 and lhx5/lim5, and with the N-terminus of ldb1. Shows overlapping expression with lhx1/lim1 and ldb1 in the gastrula mesoderm, and expression overlaps with ldb1 throughout early embryogenesis. After gastrulation, expression is gradually restricted to tissues originated from the ectoderm, the neuroectoderm, neural crest and epidermis, and subsequently to the neural tube as well as the head and tailbud region.

It is found in the nucleus. The catalysed reaction is S-ubiquitinyl-[E2 ubiquitin-conjugating enzyme]-L-cysteine + [acceptor protein]-L-lysine = [E2 ubiquitin-conjugating enzyme]-L-cysteine + N(6)-ubiquitinyl-[acceptor protein]-L-lysine.. It participates in protein modification; protein ubiquitination. Its function is as follows. Acts as an E3 ubiquitin-protein ligase specific for ldb1, mediating ubiquitination and proteasome-dependent degradation of excess ldb1 in a RING-dependent manner. Does not degrade ldb1 bound to lhx1/lim1, nor lim1 itself and thus contributes to the establishment of proper ldb1-lhx1/lim1 stoichiometry and the formation of a ldb1-lhx1/lim1 complex. Interferes with Spemann organizer function and suppresses secondary axis formation induced by ldb1 and lhx1/lim1. In Xenopus laevis (African clawed frog), this protein is E3 ubiquitin-protein ligase RNF12-A (rnf12-a).